Reading from the N-terminus, the 138-residue chain is Acidic phospholipase A2 CoaPLA2 (138 aa).

A signal peptide spans 1 to 16 (MRTLWIVAVLLLGVEG). Disulfide bonds link cysteine 42-cysteine 131, cysteine 44-cysteine 60, cysteine 59-cysteine 111, cysteine 65-cysteine 138, cysteine 66-cysteine 104, cysteine 73-cysteine 97, and cysteine 91-cysteine 102. Residues tyrosine 43, glycine 45, and glycine 47 each coordinate Ca(2+). Residue histidine 63 is part of the active site. Aspartate 64 lines the Ca(2+) pocket. Aspartate 105 is a catalytic residue.

Belongs to the phospholipase A2 family. Group II subfamily. D49 sub-subfamily. In terms of assembly, homodimer. It depends on Ca(2+) as a cofactor. Expressed by the venom gland.

It is found in the secreted. The enzyme catalyses a 1,2-diacyl-sn-glycero-3-phosphocholine + H2O = a 1-acyl-sn-glycero-3-phosphocholine + a fatty acid + H(+). Functionally, snake venom phospholipase A2 (PLA2) that shows very low inhibition of ADP-induced platelet aggregation in platelet-rich plasma of human, rabbit and guinea pig. Shows edema-inducing activity and myotoxicity. PLA2 catalyzes the calcium-dependent hydrolysis of the 2-acyl groups in 3-sn-phosphoglycerides. This chain is Acidic phospholipase A2 CoaPLA2, found in Crotalus lutosus abyssus (Grand Canyon rattlesnake).